Consider the following 138-residue polypeptide: Secreted RxLR effector protein 51 (138 aa).

An N-terminal signal peptide occupies residues 1-19; sequence MRSSTILFVLGVAMVAVNG. The short motif at 38-53 is the RxLR-dEER element; it reads RLLRSNSGKHKTDEER. A glycan (N-linked (GlcNAc...) asparagine) is linked at Asn101.

Belongs to the RxLR effector family.

The protein localises to the secreted. The protein resides in the host nucleus. Functionally, secreted effector that completely suppresses the host cell death induced by cell death-inducing proteins. The chain is Secreted RxLR effector protein 51 from Plasmopara viticola (Downy mildew of grapevine).